The sequence spans 182 residues: Core-binding factor subunit beta (182 aa).

Position 173 is a phosphoserine (Ala-173).

This sequence belongs to the CBF-beta family. Heterodimer with RUNX1, RUNX2 and RUNX3. Interacts with COPRS. Found in a complex with PRMT5 and RUNX1. In terms of assembly, (Microbial infection) Interacts with HIV-1 Vif; forming an active cullin-5-RING E3 ubiquitin-protein ligase complex (ECS complex).

The protein localises to the nucleus. Functionally, forms the heterodimeric complex core-binding factor (CBF) with RUNX family proteins (RUNX1, RUNX2, and RUNX3). RUNX members modulate the transcription of their target genes through recognizing the core consensus binding sequence 5'-TGTGGT-3', or very rarely, 5'-TGCGGT-3', within their regulatory regions via their runt domain, while CBFB is a non-DNA-binding regulatory subunit that allosterically enhances the sequence-specific DNA-binding capacity of RUNX. The heterodimers bind to the core site of a number of enhancers and promoters, including murine leukemia virus, polyomavirus enhancer, T-cell receptor enhancers, LCK, IL3 and GM-CSF promoters. CBF complexes repress ZBTB7B transcription factor during cytotoxic (CD8+) T cell development. They bind to RUNX-binding sequence within the ZBTB7B locus acting as transcriptional silencer and allowing for cytotoxic T cell differentiation. (Microbial infection) Following infection, hijacked by the HIV-1 Vif protein, leading to the formation a cullin-5-RING E3 ubiquitin-protein ligase complex (ECS complex) that catalyzes ubiquitination and degradation of APOBEC3F and APOBEC3G. The complex can also ubiquitinate APOBEC3H to some extent. Association with HIV-1 Vif protein also inhibits the transcription coactivator activity of CBFB/CBF-beta. In Homo sapiens (Human), this protein is Core-binding factor subunit beta (CBFB).